The chain runs to 280 residues: Octanoyltransferase LIP2p2, chloroplastic (280 aa).

Residues 1–34 constitute a chloroplast transit peptide; it reads MVFSVATSSVTNPKLHHHHHLSDFNRNRVSTSLK. In terms of domain architecture, BPL/LPL catalytic spans 81-270; that stretch reads QECSDSLIIL…EFSEVFQLQM (190 aa). Substrate-binding positions include 123–130, 191–193, and 204–206; these read RGGEVTYH, AIG, and GLA. Cysteine 222 acts as the Acyl-thioester intermediate in catalysis.

It belongs to the LipB family. In terms of tissue distribution, expressed in roots, leaves, cauline leaves, stems, siliques and flowers.

It is found in the plastid. Its subcellular location is the chloroplast. It carries out the reaction octanoyl-[ACP] + L-lysyl-[protein] = N(6)-octanoyl-L-lysyl-[protein] + holo-[ACP] + H(+). The protein operates within protein modification; protein lipoylation via endogenous pathway; protein N(6)-(lipoyl)lysine from octanoyl-[acyl-carrier-protein]: step 1/2. Catalyzes the transfer of endogenously produced octanoic acid from octanoyl-acyl-carrier-protein onto the lipoyl domains of lipoate-dependent enzymes. Lipoyl-ACP can also act as a substrate although octanoyl-ACP is likely to be the physiological substrate. Together with LIP1P is essential for de novo plastidial protein lipoylation during seed development. Acts redundantly with LIP2P. In Arabidopsis thaliana (Mouse-ear cress), this protein is Octanoyltransferase LIP2p2, chloroplastic.